We begin with the raw amino-acid sequence, 214 residues long: ER lumen protein-retaining receptor 3 (214 aa).

Residues 1 to 4 (MNIF) are Lumenal-facing. The chain crosses the membrane as a helical span at residues 5 to 24 (RILGDVSHLLAIIILLLKMW). The Cytoplasmic segment spans residues 25-32 (KSKSCAGI). The chain crosses the membrane as a helical span at residues 33–52 (SGKSQLLFALVFTTRYLDLF). Positions 47 to 48 (RY) are interaction with the K-D-E-L motif on target proteins. Residues 53-58 (TVFISP) lie on the Lumenal side of the membrane. A helical membrane pass occupies residues 59–79 (YNTVMKIIFLACAYVTVYLIY). The Cytoplasmic portion of the chain corresponds to 80–92 (GKLRKSYDSENDT). A helical membrane pass occupies residues 93–110 (FRLEFLLVPVIGLSFLEN). Over 111 to 116 (YEFTPL) the chain is Lumenal. A helical transmembrane segment spans residues 117-135 (EILWTFSIYLESVAILPQL). The Cytoplasmic segment spans residues 136-149 (FMISKTGEAESITT). A helical membrane pass occupies residues 150-168 (HYLFFLGLYRVLYLANWIW). Residues 159–169 (RVLYLANWIWR) are interaction with the K-D-E-L motif on target proteins. Over 169–178 (RYHTEKFYDQ) the chain is Lumenal. Residues 179–199 (IAVVSGVVQTIFYFDFFYLYV) form a helical membrane-spanning segment. Topologically, residues 200–214 (TKVLKGKKLSLPMPV) are cytoplasmic. Positions 204–207 (KGKK) are important for recycling of cargo proteins with the sequence motif K-D-E-L from the Golgi to the endoplasmic reticulum.

The protein belongs to the ERD2 family.

It localises to the endoplasmic reticulum membrane. It is found in the golgi apparatus membrane. The protein localises to the cytoplasmic vesicle. Its subcellular location is the COPI-coated vesicle membrane. Functionally, receptor for the C-terminal sequence motif K-D-E-L that is present on endoplasmic reticulum resident proteins and that mediates their recycling from the Golgi back to the endoplasmic reticulum. This is ER lumen protein-retaining receptor 3 (kdelr3) from Xenopus laevis (African clawed frog).